We begin with the raw amino-acid sequence, 373 residues long: Peptide chain release factor subunit 1 (373 aa).

This sequence belongs to the eukaryotic release factor 1 family. In terms of assembly, heterodimer of two subunits, one of which binds GTP.

The protein resides in the cytoplasm. Its function is as follows. Directs the termination of nascent peptide synthesis (translation) in response to the termination codons UAA, UAG and UGA. This chain is Peptide chain release factor subunit 1 (prf1), found in Aeropyrum pernix (strain ATCC 700893 / DSM 11879 / JCM 9820 / NBRC 100138 / K1).